Reading from the N-terminus, the 504-residue chain is Tegument protein VP16 homolog (504 aa).

3 disordered regions span residues 354–381 (EAGG…RLQR), 395–421 (ATPR…QGRR), and 435–486 (RSGP…ANPF). A compositionally biased stretch (low complexity) spans 361 to 378 (RSGSTRTRGRAARSTTGR). A compositionally biased stretch (low complexity) spans 447 to 460 (PVRSGLGLSRARGS).

Belongs to the herpesviridae tegument protein VP16 protein family. Associates with the VP16-induced complex; binding to host HCFC1 activates VP16 for association with the octamer motif-binding host protein POU2F1, to form a multiprotein-DNA complex responsible for activating transcription of the viral immediate early genes.

It is found in the virion tegument. It localises to the host nucleus. Its function is as follows. Transcriptional activator of immediate-early (IE) gene products (alpha genes). Acts as a key activator of lytic infection by initiating the lytic program through the assembly of the transcriptional regulatory VP16-induced complex composed of VP16 and two cellular factors, HCFC1 and POU2F1. VP16-induced complex represents a regulatory switch: when it is on, it promotes IE-gene expression and thus lytic infection, and when it is off, it limits IE-gene transcription favoring latent infection. May play a role in the aggregation of tegument proteins around nucleocapsids during virus morphogenesis. This is Tegument protein VP16 homolog from Bos taurus (Bovine).